A 305-amino-acid polypeptide reads, in one-letter code: Large ribosomal subunit protein uL2m (305 aa).

The N-terminal 60 residues, 1 to 60 (MALCALTRALRSLNLAPPTVAAPAPSLFPAAQMMNNGLLQQPSALMLLPCRPVLTSVALN), are a transit peptide targeting the mitochondrion. The tract at residues 264-283 (RWLGKRPNSGRWHRKGGWAG) is disordered. Positions 274 to 283 (RWHRKGGWAG) are enriched in basic residues.

This sequence belongs to the universal ribosomal protein uL2 family. In terms of assembly, component of the mitochondrial large ribosomal subunit (mt-LSU). Mature mammalian 55S mitochondrial ribosomes consist of a small (28S) and a large (39S) subunit. The 28S small subunit contains a 12S ribosomal RNA (12S mt-rRNA) and 30 different proteins. The 39S large subunit contains a 16S rRNA (16S mt-rRNA), a copy of mitochondrial valine transfer RNA (mt-tRNA(Val)), which plays an integral structural role, and 52 different proteins.

It localises to the mitochondrion. In Homo sapiens (Human), this protein is Large ribosomal subunit protein uL2m (MRPL2).